Reading from the N-terminus, the 162-residue chain is NADH-quinone oxidoreductase subunit I (162 aa).

4Fe-4S ferredoxin-type domains are found at residues 53 to 83 (LRRY…IEAE) and 93 to 122 (TRYD…EGPN). Residues cysteine 63, cysteine 66, cysteine 69, cysteine 73, cysteine 102, cysteine 105, cysteine 108, and cysteine 112 each coordinate [4Fe-4S] cluster.

This sequence belongs to the complex I 23 kDa subunit family. As to quaternary structure, NDH-1 is composed of 14 different subunits. Subunits NuoA, H, J, K, L, M, N constitute the membrane sector of the complex. [4Fe-4S] cluster serves as cofactor.

The protein resides in the cell inner membrane. The catalysed reaction is a quinone + NADH + 5 H(+)(in) = a quinol + NAD(+) + 4 H(+)(out). NDH-1 shuttles electrons from NADH, via FMN and iron-sulfur (Fe-S) centers, to quinones in the respiratory chain. The immediate electron acceptor for the enzyme in this species is believed to be ubiquinone. Couples the redox reaction to proton translocation (for every two electrons transferred, four hydrogen ions are translocated across the cytoplasmic membrane), and thus conserves the redox energy in a proton gradient. This chain is NADH-quinone oxidoreductase subunit I, found in Granulibacter bethesdensis (strain ATCC BAA-1260 / CGDNIH1).